The primary structure comprises 310 residues: Protein N-terminal asparagine amidohydrolase (310 aa).

In terms of assembly, monomer.

The protein resides in the cytoplasm. The enzyme catalyses N-terminal L-asparaginyl-[protein] + H2O + H(+) = N-terminal L-aspartyl-[protein] + NH4(+). With respect to regulation, inhibited by micromolar concentrations of copper and zinc ions. N-terminal asparagine deamidase that mediates deamidation of N-terminal asparagine residues to aspartate. Required for the ubiquitin-dependent turnover of intracellular proteins that initiate with Met-Asn. These proteins are acetylated on the retained initiator methionine and can subsequently be modified by the removal of N-acetyl methionine by acylaminoacid hydrolase (AAH). Conversion of the resulting N-terminal asparagine to aspartate by NTAN1/PNAD renders the protein susceptible to arginylation, polyubiquitination and degradation as specified by the N-end rule. This enzyme does not act on substrates with internal or C-terminal asparagines and does not act on glutamine residues in any position, nor on acetylated N-terminal peptidyl Asn. The sequence is that of Protein N-terminal asparagine amidohydrolase (NTAN1) from Homo sapiens (Human).